The sequence spans 286 residues: MDLWFSEVHTPDVKLSLRTAKQLYAGKSEWQDIEVLDTPAFGKILILNGHVLFSDADDFVYNEMTVHVPMAVHPNPKKVLVIGGGDGGVAQVLTLYPELEQIDIVEPDEMLVEVCREYFPDFAAGLDDPRVTIYYQNGLRFLRNCEDDYDIIINDATDPFGHTEGLFTKEFYGNSYRALKEDGIMIYQHGSPFFDEDESACRSMHRKVNQAFPISRVYQAHIPTSPAGYWLFGFASKKYHPVKDFDKEGWKKRQLFTEYYTANLHVGAFMLPKYVEDILEEEEGKK.

Residues 2-237 (DLWFSEVHTP…GYWLFGFASK (236 aa)) form the PABS domain. An S-methyl-5'-thioadenosine-binding site is contributed by Gln31. Asp86 provides a ligand contact to spermidine. S-methyl-5'-thioadenosine contacts are provided by residues Glu106 and 137–138 (NG). Asp155 acts as the Proton acceptor in catalysis.

It belongs to the spermidine/spermine synthase family. In terms of assembly, homodimer or homotetramer.

It is found in the cytoplasm. It catalyses the reaction S-adenosyl 3-(methylsulfanyl)propylamine + putrescine = S-methyl-5'-thioadenosine + spermidine + H(+). The protein operates within amine and polyamine biosynthesis; spermidine biosynthesis; spermidine from putrescine: step 1/1. Functionally, catalyzes the irreversible transfer of a propylamine group from the amino donor S-adenosylmethioninamine (decarboxy-AdoMet) to putrescine (1,4-diaminobutane) to yield spermidine. The sequence is that of Polyamine aminopropyltransferase from Streptococcus pneumoniae serotype 4 (strain ATCC BAA-334 / TIGR4).